The sequence spans 154 residues: 6,7-dimethyl-8-ribityllumazine synthase (154 aa).

Residues Phe23, 57-59 (AFE), and 81-83 (AVI) each bind 5-amino-6-(D-ribitylamino)uracil. 86–87 (ST) contributes to the (2S)-2-hydroxy-3-oxobutyl phosphate binding site. The Proton donor role is filled by His89. Phe114 is a binding site for 5-amino-6-(D-ribitylamino)uracil. Arg128 is a binding site for (2S)-2-hydroxy-3-oxobutyl phosphate.

The protein belongs to the DMRL synthase family.

It catalyses the reaction (2S)-2-hydroxy-3-oxobutyl phosphate + 5-amino-6-(D-ribitylamino)uracil = 6,7-dimethyl-8-(1-D-ribityl)lumazine + phosphate + 2 H2O + H(+). It participates in cofactor biosynthesis; riboflavin biosynthesis; riboflavin from 2-hydroxy-3-oxobutyl phosphate and 5-amino-6-(D-ribitylamino)uracil: step 1/2. Catalyzes the formation of 6,7-dimethyl-8-ribityllumazine by condensation of 5-amino-6-(D-ribitylamino)uracil with 3,4-dihydroxy-2-butanone 4-phosphate. This is the penultimate step in the biosynthesis of riboflavin. The polypeptide is 6,7-dimethyl-8-ribityllumazine synthase (Campylobacter jejuni subsp. jejuni serotype O:2 (strain ATCC 700819 / NCTC 11168)).